The chain runs to 252 residues: MGTGGRGRPTPGLNVYEVFLSLQGEGKFVGEPQAFVRFSGCNLRCAYCDEPASRSSRRRALIRRVSGEVELELPVPCGPEDVVEVLVELEDLEDTFGTVSLTGGEPLVQPWGALKELIERLRERGFRVLLETNASLPDRAPLIDELADVVSADVKLPSHGPNMDDFPDRCLRFLERISAEVYAKVVLVDEECYQHAESALKGLHRLGVEPIYLQPATGSEHDLEDLWELAGLVNADVRVLPQVHKLVDFIPR.

Residues 22 to 24 (LQG) and Arg37 each bind substrate. A Radical SAM core domain is found at 28–251 (FVGEPQAFVR…QVHKLVDFIP (224 aa)). Cys41, Cys45, and Cys48 together coordinate [4Fe-4S] cluster. Thr102 serves as a coordination point for substrate. Residue Gly104 coordinates S-adenosyl-L-methionine.

Belongs to the radical SAM superfamily. 7-carboxy-7-deazaguanine synthase family. Homodimer. [4Fe-4S] cluster is required as a cofactor. Requires S-adenosyl-L-methionine as cofactor. The cofactor is Mg(2+).

The catalysed reaction is 6-carboxy-5,6,7,8-tetrahydropterin + H(+) = 7-carboxy-7-deazaguanine + NH4(+). It participates in purine metabolism; 7-cyano-7-deazaguanine biosynthesis. Catalyzes the complex heterocyclic radical-mediated conversion of 6-carboxy-5,6,7,8-tetrahydropterin (CPH4) to 7-carboxy-7-deazaguanine (CDG), a step common to the biosynthetic pathways of all 7-deazapurine-containing compounds. The polypeptide is 7-carboxy-7-deazaguanine synthase (Methanopyrus kandleri (strain AV19 / DSM 6324 / JCM 9639 / NBRC 100938)).